The primary structure comprises 434 residues: MNHPDIAQRVYNHTWKLDPIIRSLLDTDFYKLLMLQMIWGLYPNVNVTFTLINRTKTIRLADDIDEGELRAQLDHALSLRFTKKEMIWLAGNTFYGRKQIFKPDFLHWLKNFQLPEYELTRKDGQYILHFHGPWSHSSMWEIPALAIISELRSRAAMKNLDRFALDVLYARAKAKMWSKVEQLKKLPDIKISDFGTRRRHSFLWQRWCVEALKEGIGDSFTGTSNVLLAMATDLEALGTNAHELPMVIAALTNNDNELCKAPYQVLQDWNRYYGGNLLIVLPDTFGTETFLRNAPDWVADWTGFRPDSAPPIEGGERIIQWWKEKGKDPREKLLIFSDALDVNTIEQTYHHFHGRVRMSFGWGTDLTNDFVGCAPQKIATFDALSLVCKVTHANGRPAVKLSDNPEKTIGDPREIQRYLNFFGNENFITRPINT.

Position 242 is a phosphohistidine; by autocatalysis (His242).

Belongs to the NAPRTase family. In terms of processing, transiently phosphorylated on a His residue during the reaction cycle. Phosphorylation strongly increases the affinity for substrates and increases the rate of nicotinate D-ribonucleotide production. Dephosphorylation regenerates the low-affinity form of the enzyme, leading to product release.

The enzyme catalyses nicotinate + 5-phospho-alpha-D-ribose 1-diphosphate + ATP + H2O = nicotinate beta-D-ribonucleotide + ADP + phosphate + diphosphate. It functions in the pathway cofactor biosynthesis; NAD(+) biosynthesis; nicotinate D-ribonucleotide from nicotinate: step 1/1. In terms of biological role, catalyzes the synthesis of beta-nicotinate D-ribonucleotide from nicotinate and 5-phospho-D-ribose 1-phosphate at the expense of ATP. The polypeptide is Nicotinate phosphoribosyltransferase (Bartonella quintana (strain Toulouse) (Rochalimaea quintana)).